The primary structure comprises 118 residues: Mu-like prophage FluMu tail tube protein (118 aa).

Positions 12–32 (RLNGKEWPSDNDGTLTPGGKE) are disordered.

This sequence to phage Mu protein M.

This chain is Mu-like prophage FluMu tail tube protein, found in Haemophilus influenzae (strain ATCC 51907 / DSM 11121 / KW20 / Rd).